A 162-amino-acid polypeptide reads, in one-letter code: Type IV major fimbrial protein FimA (162 aa).

A propeptide spans 1-7 (leader sequence); the sequence is MKSLQKG. The residue at position 8 (Phe-8) is an N-methylphenylalanine. The helical transmembrane segment at 8–28 threads the bilayer; sequence FTLIELMIVVAIIGILAAFAI. Cys-63 and Cys-106 are disulfide-bonded.

The protein belongs to the N-Me-Phe pilin family.

Its subcellular location is the fimbrium. The protein resides in the membrane. Its function is as follows. Major component of the type IV fimbriae that plays an essential role in twitching motility, natural transformation, and protease secretion. The protein is Type IV major fimbrial protein FimA (fimA) of Dichelobacter nodosus (strain VCS1703A).